A 591-amino-acid polypeptide reads, in one-letter code: Aspartate--tRNA(Asp/Asn) ligase (591 aa).

Glutamate 174 contacts L-aspartate. The aspartate stretch occupies residues 198-201; that stretch reads QLFK. Arginine 220 lines the L-aspartate pocket. ATP is bound by residues 220–222 and glutamine 229; that span reads RDE. Histidine 450 is an L-aspartate binding site. An ATP-binding site is contributed by glutamate 483. An L-aspartate-binding site is contributed by arginine 490. 535-538 provides a ligand contact to ATP; that stretch reads GLDR.

The protein belongs to the class-II aminoacyl-tRNA synthetase family. Type 1 subfamily. Homodimer.

It is found in the cytoplasm. It carries out the reaction tRNA(Asx) + L-aspartate + ATP = L-aspartyl-tRNA(Asx) + AMP + diphosphate. In terms of biological role, aspartyl-tRNA synthetase with relaxed tRNA specificity since it is able to aspartylate not only its cognate tRNA(Asp) but also tRNA(Asn). Reaction proceeds in two steps: L-aspartate is first activated by ATP to form Asp-AMP and then transferred to the acceptor end of tRNA(Asp/Asn). This is Aspartate--tRNA(Asp/Asn) ligase from Pseudomonas aeruginosa (strain LESB58).